Reading from the N-terminus, the 918-residue chain is Pre-pro-metalloprotease PrtV (918 aa).

A signal peptide spans 1–23 (MKTIKKTLLAAAIASFFSSGLYA). The propeptide occupies 24–105 (QTPIDLGVVN…QKGPHKARVF (82 aa)). A Zn(2+)-binding site is contributed by His330. The active site involves Glu331. His334 is a Zn(2+) binding site. Residues Ile757, Asp782, Asp821, and Asp825 each contribute to the Ca(2+) site. 2 consecutive PKD domains span residues 758–835 (APVA…TIKV) and 855–918 (VTMW…KVKL). The propeptide occupies 835-918 (VDTPNALPQA…VTTITIKVKL (84 aa)).

This sequence belongs to the peptidase M6 family. Requires Zn(2+) as cofactor. In terms of processing, prtV is expressed as an inactive, multidomain, 102 kDa pre-pro-metalloprotease. To form a catalytically active protease, PrtV is first secreted, and then it undergoes N- and C-terminal cleavages during envelope translocation to yield a 81 kDa pro-metalloprotease. Outside the cell, the 81 kDa pro-metalloprotease undergoes an auto-cleavage. The two major products of autoproteolysis (37 kDa and 18 kDa) together form the so called 55 kDa active complex.

The protein localises to the secreted. Calcium plays an important structural role, providing stability to this protein in the cytoplasm. Outside the cell, the decrease of the calcium concentration triggers the autoproteolysis. PrtV activity is increased by 25 mM of Sr(2+) or Mg(2+) and to some extent by Ba(2+); however, Ba(2+) inhibits PrtV at higher concentrations. Completely inhibited by EDTA and 1,10-phenanthroline. Its function is as follows. Metalloprotease that exhibits a cytotoxic effect leading to cell death. In host tissues, it could play a role in pathogenesis by modulating the stability of the extracellular matrix components such as fibronectin and fibrinogen. Also able to cleave plasminogen. This chain is Pre-pro-metalloprotease PrtV, found in Vibrio cholerae serotype O1 (strain ATCC 39315 / El Tor Inaba N16961).